The sequence spans 533 residues: Zona pellucida sperm-binding protein 3 receptor (533 aa).

Positions Met1 to Gly28 are cleaved as a signal peptide. Sushi domains are found at residues Asp29–Lys88, Lys89–Ile150, Val151–Lys215, Val216–Pro275, Asn276–Arg342, Val343–Ser408, and Ala409–Trp467. Cystine bridges form between Cys30/Cys74, Cys60/Cys86, Cys91/Cys132, Cys118/Cys148, Cys153/Cys196, Cys182/Cys213, Cys218/Cys260, Cys246/Cys273, Cys278/Cys328, Cys312/Cys340, Cys345/Cys393, Cys378/Cys406, Cys411/Cys452, and Cys438/Cys465. 2 N-linked (GlcNAc...) asparagine glycosylation sites follow: Asn68 and Asn77. Asn185, Asn191, and Asn200 each carry an N-linked (GlcNAc...) asparagine glycan. Asn433 and Asn455 each carry an N-linked (GlcNAc...) asparagine glycan.

In terms of assembly, homooligomer; disulfide-linked. May contain 6-8 monomers per oligomer. The N-terminus may be blocked. In terms of tissue distribution, testis. Not expressed in heart, brain, liver or kidney.

Its subcellular location is the cytoplasmic vesicle. The protein resides in the secretory vesicle. It is found in the acrosome lumen. Probably involved in the formation of the dense core and M1 domain of the acrosome. May also regulate the release of certain secretory proteins following the acrosomal reaction. The chain is Zona pellucida sperm-binding protein 3 receptor (ZP3R) from Cavia porcellus (Guinea pig).